Reading from the N-terminus, the 328-residue chain is MEYHELNPLIRGRELELISKDTFEQMIQTDSIDSLGEILQSTIYQPYIYDGFDKDFEANLSQERSKLFQWLKESAPEPEIVWIYTMRYTFHNLKVLTKAEITGQNLDHLYIHDGFYSLEVLKDAIHTQVSVELPDSLMDYIREVHEYCEESTILQGIDVIYDRCFLTEQRRLGEQLGYPELLEEIIAFIDLTNITTTARGILQHRSAGFMTTVISSSGSIPKDTLLSFVRGEMASFTQFLLTTDYSELLKQVIHEEQIDLVSLEQLKDDYLSSFYQVAQTQAFGPLPLLAFLNAKEVESKNLRLLIIGKRNHFSLEQLKERMRQVYDL.

This sequence belongs to the V-ATPase V0D/AC39 subunit family.

In terms of biological role, involved in ATP-driven sodium extrusion. This Enterococcus hirae (strain ATCC 9790 / DSM 20160 / JCM 8729 / LMG 6399 / NBRC 3181 / NCIMB 6459 / NCDO 1258 / NCTC 12367 / WDCM 00089 / R) protein is V-type sodium ATPase subunit C (ntpC).